A 288-amino-acid chain; its full sequence is UDP-3-O-acyl-N-acetylglucosamine deacetylase (288 aa).

Zn(2+)-binding residues include His79, His236, and Asp240. His263 serves as the catalytic Proton donor.

Belongs to the LpxC family. It depends on Zn(2+) as a cofactor.

The enzyme catalyses a UDP-3-O-[(3R)-3-hydroxyacyl]-N-acetyl-alpha-D-glucosamine + H2O = a UDP-3-O-[(3R)-3-hydroxyacyl]-alpha-D-glucosamine + acetate. It functions in the pathway glycolipid biosynthesis; lipid IV(A) biosynthesis; lipid IV(A) from (3R)-3-hydroxytetradecanoyl-[acyl-carrier-protein] and UDP-N-acetyl-alpha-D-glucosamine: step 2/6. Its function is as follows. Catalyzes the hydrolysis of UDP-3-O-myristoyl-N-acetylglucosamine to form UDP-3-O-myristoylglucosamine and acetate, the committed step in lipid A biosynthesis. In Rickettsia africae (strain ESF-5), this protein is UDP-3-O-acyl-N-acetylglucosamine deacetylase.